The primary structure comprises 282 residues: Shikimate dehydrogenase (NADP(+)) (282 aa).

Shikimate contacts are provided by residues 16–18 (SLS) and Thr-63. Lys-67 acts as the Proton acceptor in catalysis. 2 residues coordinate shikimate: Asn-88 and Asp-103. NADP(+) contacts are provided by residues 128-132 (GAGGA) and Leu-219. Position 221 (Tyr-221) interacts with shikimate. Gly-243 serves as a coordination point for NADP(+).

The protein belongs to the shikimate dehydrogenase family. Homodimer.

It carries out the reaction shikimate + NADP(+) = 3-dehydroshikimate + NADPH + H(+). The protein operates within metabolic intermediate biosynthesis; chorismate biosynthesis; chorismate from D-erythrose 4-phosphate and phosphoenolpyruvate: step 4/7. Its function is as follows. Involved in the biosynthesis of the chorismate, which leads to the biosynthesis of aromatic amino acids. Catalyzes the reversible NADPH linked reduction of 3-dehydroshikimate (DHSA) to yield shikimate (SA). This Xylella fastidiosa (strain M12) protein is Shikimate dehydrogenase (NADP(+)).